Reading from the N-terminus, the 709-residue chain is MAQRHSDSSLEEKLLGHRFHSELRLDAGGNPASGLPMVRGSPRVRDDAAFQPQVPAPPQPRPPGHEEPWPIVLSTESPAALKLGTQQLIPKSLAVASKAKTPARHQSFGAAVLSREAARRDPKLLPAPSFSLDDMDVDKDPGGMLRRNLRNQSYRAAMKGLGKPGGQGDAIQLSPKLQALAEEPSQPHTRSPAKNKKTLGRKRGHKGSFKDDPQLYQEIQERGLNTSQESDDDILDESSSPEGTQKVDATIVVKSYRPAQVTWSQLPEVVELGILDQLSTEERKRQEAMFEILTSEFSYQHSLSILVEEFLQSKELRATVTQMEHHHLFSNILDVLGASQRFFEDLEQRHKAQVLVEDISDILEEHAEKHFHPYIAYCSNEVYQQRTLQKLISSNAAFREALREIERRPACGGLPMLSFLILPMQRVTRLPLLMDTLCLKTQGHSERYKAASRALKAISKLVRQCNEGAHRMERMEQMYTLHTQLDFSKVKSLPLISASRWLLKRGELFLVEETGLFRKIASRPTCYLFLFNDVLVVTKKKSEESYMVQDYAQMNHIQVEKIEPSELPLPGGGNRSSSVPHPFQVTLLRNSEGRQEQLLLSSDSASDRARWIVALTHSERQWQGLSSKGDLPQVEITKAFFAKQADEVTLQQADVVLVLQQEDGWLYGERLRDGETGWFPEDFARFITSRVAVEGNVRRMERLRVETDV.

Alanine 2 is modified (N-acetylalanine). A phosphoserine mark is found at serine 6, serine 41, and serine 107. The disordered stretch occupies residues 22–70 (ELRLDAGGNPASGLPMVRGSPRVRDDAAFQPQVPAPPQPRPPGHEEPWP). A disordered region spans residues 114–146 (SREAARRDPKLLPAPSFSLDDMDVDKDPGGMLR). Serine 174, serine 191, and serine 208 each carry phosphoserine. The interval 180–246 (LAEEPSQPHT…ESSSPEGTQK (67 aa)) is disordered. The segment covering 191-207 (SPAKNKKTLGRKRGHKG) has biased composition (basic residues). At threonine 226 the chain carries Phosphothreonine. Phosphoserine is present on residues serine 227, serine 230, and serine 240. A required for RHOG activation and mediates interaction with EPHA2 region spans residues 275-481 (LDQLSTEERK…MERMEQMYTL (207 aa)). Positions 284-468 (KRQEAMFEIL…SKLVRQCNEG (185 aa)) constitute a DH domain. Residues 501-620 (WLLKRGELFL…WIVALTHSER (120 aa)) enclose the PH domain. Positions 629 to 689 (GDLPQVEITK…PEDFARFITS (61 aa)) constitute an SH3 domain. The PDZ-binding motif signature appears at 707–709 (TDV).

Interacts with ELMO2, EPHA2, RAC1 and RHOG; mediates activation of RAC1 by EPHA2. Interacts with TAX1BP3 (via PDZ domain). May interact with CDC42; stimulated by HPV16 E6.

It localises to the cytoplasm. Guanyl-nucleotide exchange factor of the RHOG GTPase stimulating the exchange of RHOG-associated GDP for GTP. May play a role in chemotactic cell migration by mediating the activation of RAC1 by EPHA2. May also activate CDC42 and mediate activation of CDC42 by the viral protein HPV16 E6. This chain is Rho guanine nucleotide exchange factor 16 (ARHGEF16), found in Homo sapiens (Human).